Here is a 126-residue protein sequence, read N- to C-terminus: Small ribosomal subunit protein uS13 (126 aa).

Positions 91 to 126 are disordered; sequence RHRRGLPVRGQRTSTNARTRKGPRRAIAGKKKPGKK. The segment covering 108–126 has biased composition (basic residues); it reads RTRKGPRRAIAGKKKPGKK.

The protein belongs to the universal ribosomal protein uS13 family. In terms of assembly, part of the 30S ribosomal subunit. Forms a loose heterodimer with protein S19. Forms two bridges to the 50S subunit in the 70S ribosome.

Functionally, located at the top of the head of the 30S subunit, it contacts several helices of the 16S rRNA. In the 70S ribosome it contacts the 23S rRNA (bridge B1a) and protein L5 of the 50S subunit (bridge B1b), connecting the 2 subunits; these bridges are implicated in subunit movement. Contacts the tRNAs in the A and P-sites. The protein is Small ribosomal subunit protein uS13 of Streptomyces coelicolor (strain ATCC BAA-471 / A3(2) / M145).